We begin with the raw amino-acid sequence, 254 residues long: Hydroxypyruvate/pyruvate aldolase (254 aa).

Residue histidine 47 is the Proton acceptor of the active site. Positions 151 and 177 each coordinate a divalent metal cation.

It belongs to the HpcH/HpaI aldolase family. It depends on a divalent metal cation as a cofactor.

It catalyses the reaction D-glyceraldehyde + pyruvate = 2-dehydro-3-deoxy-L-galactonate. Aldolase which can catalyze in vitro the aldolisation reaction between hydroxypyruvate (HPA) or pyruvate (PA) and D-glyceraldehyde (D-GA). The condensation of pyruvate and D-glyceraldehyde produces 2-dehydro-3-deoxy-L-galactonate as the major product. Has weak activity with hydroxypyruvate and D-glyceraldehyde. This chain is Hydroxypyruvate/pyruvate aldolase, found in Chromohalobacter salexigens (strain ATCC BAA-138 / DSM 3043 / CIP 106854 / NCIMB 13768 / 1H11).